Here is a 463-residue protein sequence, read N- to C-terminus: tRNA (guanine(10)-N(2))-methyltransferase TRMT11 (463 aa).

Alanine 2 carries the N-acetylalanine modification.

This sequence belongs to the class I-like SAM-binding methyltransferase superfamily. TRM11 methyltransferase family. Part of the heterodimeric TRMT11-TRM112 methyltransferase complex; this complex forms an active tRNA methyltransferase, where TRMT112 acts as an activator of the catalytic subunit TRMT11.

The protein resides in the cytoplasm. The enzyme catalyses guanosine(10) in tRNA + S-adenosyl-L-methionine = N(2)-methylguanosine(10) in tRNA + S-adenosyl-L-homocysteine + H(+). In terms of biological role, catalytic subunit of the TRMT11-TRM112 methyltransferase complex, that specifically mediates the S-adenosyl-L-methionine-dependent N(2)-methylation of guanosine nucleotide at position 10 (m2G10) in tRNAs. This is one of the major tRNA (guanine-N(2))-methyltransferases. The sequence is that of tRNA (guanine(10)-N(2))-methyltransferase TRMT11 from Rattus norvegicus (Rat).